A 767-amino-acid chain; its full sequence is DNA topoisomerase 1 (767 aa).

The segment covering 1-23 has biased composition (basic and acidic residues); sequence MSGDHLHNDSQIEADFRLNDSHK. Positions 1–201 are disordered; the sequence is MSGDHLHNDS…NKKKKPKKEE (201 aa). An N-acetylserine modification is found at serine 2. Residues serine 2 and serine 10 each carry the phosphoserine modification. The segment covering 24 to 39 has biased composition (basic residues); it reads HKDKHKDREHRHKEHK. The segment covering 40 to 110 has biased composition (basic and acidic residues); sequence KDKDKDREKS…DAKIKKEKEN (71 aa). At serine 59 the chain carries Phosphoserine. Residue lysine 103 forms a Glycyl lysine isopeptide (Lys-Gly) (interchain with G-Cter in SUMO2) linkage. A Glycyl lysine isopeptide (Lys-Gly) (interchain with G-Cter in SUMO); alternate cross-link involves residue lysine 105. A Glycyl lysine isopeptide (Lys-Gly) (interchain with G-Cter in SUMO2); alternate cross-link involves residue lysine 105. A Phosphoserine modification is found at serine 114. A Glycyl lysine isopeptide (Lys-Gly) (interchain with G-Cter in SUMO); alternate cross-link involves residue lysine 119. A Glycyl lysine isopeptide (Lys-Gly) (interchain with G-Cter in SUMO2); alternate cross-link involves residue lysine 119. Lysine 119 is covalently cross-linked (Glycyl lysine isopeptide (Lys-Gly) (interchain with G-Cter in SUMO1); alternate). Positions 131-168 are enriched in basic and acidic residues; that stretch reads PKEDIKPLKRLRDEDDADYKPKKIKTEDIKKEKKRKSE. Residues lysine 136 and lysine 150 each participate in a glycyl lysine isopeptide (Lys-Gly) (interchain with G-Cter in SUMO2) cross-link. Residue lysine 155 forms a Glycyl lysine isopeptide (Lys-Gly) (interchain with G-Cter in SUMO); alternate linkage. Lysine 155 participates in a covalent cross-link: Glycyl lysine isopeptide (Lys-Gly) (interchain with G-Cter in SUMO2); alternate. Residues lysine 160 and lysine 166 each participate in a glycyl lysine isopeptide (Lys-Gly) (interchain with G-Cter in SUMO2) cross-link. Lysine 174 participates in a covalent cross-link: Glycyl lysine isopeptide (Lys-Gly) (interchain with G-Cter in SUMO2); alternate. N6-acetyllysine; alternate is present on lysine 174. The span at 181 to 201 shows a compositional bias: basic and acidic residues; sequence KDKDKKVAEPDNKKKKPKKEE. A Glycyl lysine isopeptide (Lys-Gly) (interchain with G-Cter in SUMO2) cross-link involves residue lysine 206. Lysine 282 is subject to N6-acetyllysine. A Glycyl lysine isopeptide (Lys-Gly) (interchain with G-Cter in SUMO2) cross-link involves residue lysine 338. Interaction with DNA regions lie at residues 427-428 and 490-495; these read KY and RAGNEK. A Topo IB-type catalytic domain is found at 434–767; the sequence is SSRIKGEKDW…IDMTDEDYEF (334 aa). Serine 508 is subject to Phosphoserine; by CK2. A Glycyl lysine isopeptide (Lys-Gly) (interchain with G-Cter in SUMO2) cross-link involves residue lysine 551. Residues 587–589 form an interaction with DNA region; the sequence is TAK. Residues lysine 644, lysine 702, and lysine 714 each participate in a glycyl lysine isopeptide (Lys-Gly) (interchain with G-Cter in SUMO2) cross-link. Tyrosine 725 acts as the O-(3'-phospho-DNA)-tyrosine intermediate in catalysis.

This sequence belongs to the type IB topoisomerase family. In terms of assembly, monomer. Interacts with ERCC6. Interacts with TPRN; TPRN interacts with a number of DNA damage response proteins, is recruited to sites of DNA damage and may play a role in DNA damage repair. Sumoylated. Lys-119 is the main site of sumoylation. Sumoylation plays a role in partitioning TOP1 between nucleoli and nucleoplasm. Levels are dramatically increased on camptothecin (CPT) treatment. Post-translationally, phosphorylation at Ser-508 by CK2 increases binding to supercoiled DNA and sensitivity to camptothecin.

The protein localises to the nucleus. It localises to the nucleolus. It is found in the nucleoplasm. The catalysed reaction is ATP-independent breakage of single-stranded DNA, followed by passage and rejoining.. Its function is as follows. Releases the supercoiling and torsional tension of DNA introduced during the DNA replication and transcription by transiently cleaving and rejoining one strand of the DNA duplex. Introduces a single-strand break via transesterification at a target site in duplex DNA. The scissile phosphodiester is attacked by the catalytic tyrosine of the enzyme, resulting in the formation of a DNA-(3'-phosphotyrosyl)-enzyme intermediate and the expulsion of a 5'-OH DNA strand. The free DNA strand then rotates around the intact phosphodiester bond on the opposing strand, thus removing DNA supercoils. Finally, in the religation step, the DNA 5'-OH attacks the covalent intermediate to expel the active-site tyrosine and restore the DNA phosphodiester backbone. Regulates the alternative splicing of tissue factor (F3) pre-mRNA in endothelial cells. Involved in the circadian transcription of the core circadian clock component BMAL1 by altering the chromatin structure around the ROR response elements (ROREs) on the BMAL1 promoter. This is DNA topoisomerase 1 (Top1) from Mus musculus (Mouse).